The following is a 383-amino-acid chain: MVNDPPVPALLWAQEVGHVLAGRARRLMLQFGVLFCTILLLLWVSVFLYGSFYYSYMPTVSHLSPVHFHYRTDCDSSTASLCSFPVANVSLAKSGRDRVLMYGQPYRVTLELELPESPVNQDLGMFLVTVSCYTRGGRIISTSSRSVMLHYRSQLLQVLDTLLFSSLLLFGFAEQKQLLEVELYSDYRENSYVPTTGAIIEIHSKRIQMYGAYLRIHAHFTGLRYLLYNFPMTCAFVGVASNFTFLSVIVLFSYMQWVWGAVWPRHRFSLQVNIRQRDNSHHGAPRRISRHQPGQESTQQSDVTEDGESPEDPSGTEGQLSEEEKPEKRPLNGEEEQEPEASDGSWEDAALLTEANPPTSASASALAPETLGSLRQRPTCSSS.

Over 1–27 the chain is Cytoplasmic; that stretch reads MVNDPPVPALLWAQEVGHVLAGRARRL. The chain crosses the membrane as a helical span at residues 28–48; the sequence is MLQFGVLFCTILLLLWVSVFL. The Lumenal portion of the chain corresponds to 49-242; sequence YGSFYYSYMP…TCAFVGVASN (194 aa). Asn-88 and Asn-242 each carry an N-linked (GlcNAc...) asparagine glycan. Residues 243–263 form a helical membrane-spanning segment; sequence FTFLSVIVLFSYMQWVWGAVW. The Cytoplasmic portion of the chain corresponds to 264-383; it reads PRHRFSLQVN…LRQRPTCSSS (120 aa). The disordered stretch occupies residues 279-383; sequence NSHHGAPRRI…LRQRPTCSSS (105 aa). Ser-289 is modified (phosphoserine). Over residues 292–302 the composition is skewed to polar residues; it reads QPGQESTQQSD. Residues 322-332 show a composition bias toward basic and acidic residues; the sequence is EEEKPEKRPLN. Residues Ser-342 and Ser-345 each carry the phosphoserine modification. Over residues 353-371 the composition is skewed to low complexity; it reads TEANPPTSASASALAPETL.

Belongs to the seipin family. As to quaternary structure, undecamer (an oligomer having eleven subunits). Oligomerization is important for its function in lipid droplet formation. Interacts with LDAF1 to form an oligomeric complex. Interacts with RAB18. Interacts with ZFYVE1 in a RAB18-dependent manner. In terms of tissue distribution, expressed in the paraventricular nucleus of the hypothalamus (PVN) and brainstem dorsal vagal complex (DVC) in oxytocin and catecholaminergic neurons (at protein level). Highest expression detected in subcutaneous and epididymal white adipose tissue, brown adipose tissue and testis. Also expressed in brain, skeletal muscle and adrenal gland, with lower levels detected in liver, heart, kidney, spleen, lung and small intestine. In brain, detected in piriform cortex, olfactory tubercle, islands of Calleja, lateral septal nucleus, medial septal nucleus, nucleus of the vertical limb of the diagonal band, nucleus of the horizontal limb of the diagonal band, preoptic area, paraventricular thalamic nucleus, lateral globus pallidus, supraoptic nucleus, suprachiasmatic nucleus, subfornical organ, paraventricular nucleus of the hypothalamus, zona incerta, dorsomedial nucleus of the hypothalamus, ventromedial nucleus of the hypothalamus, arcuate nucleus of the hypothalamus, basomedial amygdaloid nucleus, medial amygdaloid nucleus, medial habenular, pyramidal cell layer of the hippocampus, granular layer of the dentate gyrus, posterior hypothalamus, supramammilliary nucleus, premammillary nucleus, nucleus of Darkschewitsch, Edinger-Westphal nucleus, ventral tegmental area, dorsal raphe nucleus, periaqueductal gray, median raphe nucleus, lateral parabrachial nucleus, dorsal tegmental nucleus, laterodorsal tegmental nucleus, locus coeruleus, Barrington's nucleus, medial vestibular nucleus, ambiguous nucleus, dorsal vagal complex and hypoglossal nucleus.

The protein resides in the endoplasmic reticulum membrane. The protein localises to the lipid droplet. Its function is as follows. Plays a crucial role in the formation of lipid droplets (LDs) which are storage organelles at the center of lipid and energy homeostasis. In association with LDAF1, defines the sites of LD formation in the ER. Also required for growth and maturation of small nascent LDs into larger mature LDs. Mediates the formation and/or stabilization of endoplasmic reticulum-lipid droplets (ER-LD) contacts, facilitating protein and lipid delivery from the ER into growing LDs. Regulates the maturation of ZFYVE1-positive nascent LDs and the function of the RAB18-ZFYVE1 complex in mediating the formation of ER-LD contacts. Binds anionic phospholipids including phosphatidic acid. Plays an important role in the differentiation and development of adipocytes. This is Seipin from Mus musculus (Mouse).